A 154-amino-acid chain; its full sequence is MATFSQKPAEVEKKWILIDAEGLVVGRLASIIAMRLRGKHKATFTPHVDDGDNVIVINADKIVLTGKKYEDKVYYWHTGYAGGIKERTARQIIEGRFPERVVEKAVERMVPRGPLGRRQMKNLRVYAGSNHPHEAQQPVVLDVAKLNKKNVRSA.

This sequence belongs to the universal ribosomal protein uL13 family. In terms of assembly, part of the 50S ribosomal subunit.

In terms of biological role, this protein is one of the early assembly proteins of the 50S ribosomal subunit, although it is not seen to bind rRNA by itself. It is important during the early stages of 50S assembly. In Rhizobium rhizogenes (strain K84 / ATCC BAA-868) (Agrobacterium radiobacter), this protein is Large ribosomal subunit protein uL13.